The chain runs to 469 residues: Type II secretion system protein HxcR (469 aa).

Residue 246 to 253 (GPTGSGKT) coordinates ATP.

This sequence belongs to the GSP E family.

The protein localises to the cytoplasm. It carries out the reaction ATP + H2O + cellular proteinSide 1 = ADP + phosphate + cellular proteinSide 2.. Its function is as follows. ATPase component of the type II secretion system required for the energy-dependent secretion of extracellular factors from the periplasm. Acts as a molecular motor to provide the energy that is required for the export of proteins. The Hxc system is involved in the secretion of low-molecular-weight alkaline phosphatase L-AP (LapA). Is probably also involved in the secretion of the phosphate-binding protein PstS. The chain is Type II secretion system protein HxcR from Pseudomonas aeruginosa (strain ATCC 15692 / DSM 22644 / CIP 104116 / JCM 14847 / LMG 12228 / 1C / PRS 101 / PAO1).